Here is a 769-residue protein sequence, read N- to C-terminus: Phosphatidylinositol 4-phosphate 5-kinase 8 (769 aa).

MORN repeat units lie at residues 16–38 (YSGQ…DGII), 39–61 (YEGD…SGAK), 62–84 (YEGD…DGSV), 85–107 (YAGA…NSDV), 108–130 (YDGS…NGNR), 131–153 (FIGN…NGDL), 154–176 (FNGF…DGGF), and 177–198 (YFGT…AGSK). Positions 266–289 (PPRDFMHHGPSSKSARSVDSGQSE) are disordered. Over residues 276–288 (SSKSARSVDSGQS) the composition is skewed to polar residues. The PIPK domain maps to 344-765 (WNHYLMLNLQ…RFIDFLLKVF (422 aa)). The segment at 725–746 (YNMKKKVEHTCKSMKYDPMTIS) is activation loop.

The catalysed reaction is a 1,2-diacyl-sn-glycero-3-phospho-(1D-myo-inositol 4-phosphate) + ATP = a 1,2-diacyl-sn-glycero-3-phospho-(1D-myo-inositol-4,5-bisphosphate) + ADP + H(+). The polypeptide is Phosphatidylinositol 4-phosphate 5-kinase 8 (PIP5K8) (Arabidopsis thaliana (Mouse-ear cress)).